The chain runs to 289 residues: MYB transcription factor 69 (289 aa).

HTH myb-type domains are found at residues 9 to 61 (KAGV…TNYL) and 62 to 116 (RPGI…KKKL). 2 consecutive DNA-binding regions (H-T-H motif) follow at residues 37 to 61 (WRAV…TNYL) and 89 to 112 (WAAI…NTHL). Disordered stretches follow at residues 127–162 (APPR…ADST) and 225–252 (SSAI…QQQQ). The segment covering 139–154 (ADCRRHDMTRSSKDSH) has biased composition (basic and acidic residues).

Mainly expressed in highly lignified tissues such as vascular tissues.

It localises to the nucleus. In terms of biological role, transcription factor that binds to the promoter of MYB31 and MYB42 and activates directly their expression, thus repressing lignin biosynthesis. This is MYB transcription factor 69 from Zea mays (Maize).